The sequence spans 281 residues: Penicillin-insensitive murein endopeptidase (281 aa).

The N-terminal stretch at Met-1 to Ala-24 is a signal peptide. Intrachain disulfides connect Cys-49/Cys-270, Cys-192/Cys-240, and Cys-221/Cys-228. 4 residues coordinate Zn(2+): His-115, His-118, Asp-125, and His-216. The segment at Glu-230–Gln-271 is disordered. Polar residues predominate over residues Ser-246 to Ser-255.

It belongs to the peptidase M74 family. Dimer. Requires Zn(2+) as cofactor.

The protein localises to the periplasm. In terms of biological role, murein endopeptidase that cleaves the D-alanyl-meso-2,6-diamino-pimelyl amide bond that connects peptidoglycan strands. Likely plays a role in the removal of murein from the sacculus. This is Penicillin-insensitive murein endopeptidase (mepA) from Pectobacterium atrosepticum (strain SCRI 1043 / ATCC BAA-672) (Erwinia carotovora subsp. atroseptica).